The sequence spans 397 residues: Phosphoglycerate kinase (397 aa).

Residues 19–21 (DFN), Arg35, 58–61 (HLGR), Arg117, and Arg150 each bind substrate. ATP is bound by residues Lys201, Glu323, and 349–352 (GGDS).

This sequence belongs to the phosphoglycerate kinase family. As to quaternary structure, monomer.

Its subcellular location is the cytoplasm. The catalysed reaction is (2R)-3-phosphoglycerate + ATP = (2R)-3-phospho-glyceroyl phosphate + ADP. It participates in carbohydrate degradation; glycolysis; pyruvate from D-glyceraldehyde 3-phosphate: step 2/5. The sequence is that of Phosphoglycerate kinase from Syntrophobacter fumaroxidans (strain DSM 10017 / MPOB).